Reading from the N-terminus, the 194-residue chain is Ribonuclease HII (194 aa).

In terms of domain architecture, RNase H type-2 spans 3-193; the sequence is ILTAGVDEAG…VRNLLAQQAL (191 aa). A divalent metal cation contacts are provided by Asp-9, Glu-10, and Asp-101.

This sequence belongs to the RNase HII family. Requires Mn(2+) as cofactor. The cofactor is Mg(2+).

Its subcellular location is the cytoplasm. It catalyses the reaction Endonucleolytic cleavage to 5'-phosphomonoester.. In terms of biological role, endonuclease that specifically degrades the RNA of RNA-DNA hybrids. This chain is Ribonuclease HII (rnhB), found in Neisseria meningitidis serogroup B (strain ATCC BAA-335 / MC58).